The following is an 83-amino-acid chain: MSKGQSLQDPYLNALRKERIPVSIFLVNGIKLQGQIESFDQFVILLKNTVSQMVYKHAISTVVPARNVRIAAQGEGENEASNA.

In terms of domain architecture, Sm spans 9 to 68 (DPYLNALRKERIPVSIFLVNGIKLQGQIESFDQFVILLKNTVSQMVYKHAISTVVPARNV).

The protein belongs to the Hfq family. In terms of assembly, homohexamer.

In terms of biological role, RNA chaperone that binds small regulatory RNA (sRNAs) and mRNAs to facilitate mRNA translational regulation in response to envelope stress, environmental stress and changes in metabolite concentrations. Also binds with high specificity to tRNAs. This is RNA-binding protein Hfq from Hahella chejuensis (strain KCTC 2396).